Here is a 692-residue protein sequence, read N- to C-terminus: Methionine--tRNA ligase (692 aa).

Positions 12 to 22 (PYANGSFHIGH) match the 'HIGH' region motif. Zn(2+) is bound by residues Cys-143, Cys-146, Cys-156, and Cys-159. The 'KMSKS' region signature appears at 341 to 345 (KMSKS). Lys-344 lines the ATP pocket. The tRNA-binding domain maps to 586–692 (DFAKIDLRIA…PGAQPGMRVR (107 aa)).

The protein belongs to the class-I aminoacyl-tRNA synthetase family. MetG type 1 subfamily. In terms of assembly, homodimer. Zn(2+) is required as a cofactor.

It localises to the cytoplasm. It catalyses the reaction tRNA(Met) + L-methionine + ATP = L-methionyl-tRNA(Met) + AMP + diphosphate. Functionally, is required not only for elongation of protein synthesis but also for the initiation of all mRNA translation through initiator tRNA(fMet) aminoacylation. In Bordetella pertussis (strain Tohama I / ATCC BAA-589 / NCTC 13251), this protein is Methionine--tRNA ligase.